The primary structure comprises 1040 residues: Chromatin modification-related protein rik1 (1040 aa).

This sequence belongs to the DDB1 family. In terms of assembly, component of the Clr4 methyltransferase complex (ClrC) composed of at least clr4, rik1, pcu4, rbx1, raf1 and raf2. The cullin pcu4, rik1, raf1, raf2 and the ring-box protein rbx1 are components of an E3 ubiquitin ligase, whose activity is essential for heterochromatin assembly.

Its subcellular location is the nucleus. The protein resides in the cytoplasm. The protein localises to the cytoskeleton. It localises to the microtubule organizing center. It is found in the spindle pole body. Its subcellular location is the chromosome. In terms of biological role, component of the Clr4 methyltransferase complex (ClrC) which contributes to the establishment of heterochromatin by specifically methylating histone H3 to form H3K9me. ClrC preferentially ubiquitylates H3K14 and ClrC-mediated H3 ubiquitination promotes clr4 methyltransferase activity for the methylation of H3K9. H3K9me represents a specific tag for epigenetic transcriptional repression by recruiting swi6/HP1 to methylated histones which leads to transcriptional silencing within centromeric heterochromatin, telomeric regions and at the silent mating-type loci. Rik1 is involved in the RNAi-mediated targeting of ClrC to heterochromatic repeat elements. Rik1 also has a function in meiotic telomere clustering. This Schizosaccharomyces pombe (strain 972 / ATCC 24843) (Fission yeast) protein is Chromatin modification-related protein rik1 (rik1).